A 383-amino-acid chain; its full sequence is Corticosteroid-binding globulin (383 aa).

2 N-linked (GlcNAc...) asparagine glycosylation sites follow: Asn74 and Asn154. Gln232 is a cortisol binding site. Asn238 is a glycosylation site (N-linked (GlcNAc...) asparagine). Residue Gln264 coordinates cortisol. A glycan (N-linked (GlcNAc...) asparagine) is linked at Asn308. Trp371 provides a ligand contact to cortisol.

The protein belongs to the serpin family. Produced and secreted by hepatocytes, but has also been identified in a number of glycocorticoid responsive cells (it is found in maternal lung, spleen, and ovary and fetal kidney).

It localises to the secreted. Major transport protein for glucocorticoids and progestins in the blood of almost all vertebrate species. The polypeptide is Corticosteroid-binding globulin (SERPINA6) (Oryctolagus cuniculus (Rabbit)).